A 250-amino-acid chain; its full sequence is Coproheme decarboxylase (250 aa).

Residues Arg131, Tyr145 to Lys149, His172, and Gln185 contribute to the Fe-coproporphyrin III site. Tyr145 is a catalytic residue.

The protein belongs to the ChdC family. Type 1 subfamily. Fe-coproporphyrin III is required as a cofactor.

The enzyme catalyses Fe-coproporphyrin III + 2 H2O2 + 2 H(+) = heme b + 2 CO2 + 4 H2O. It catalyses the reaction Fe-coproporphyrin III + H2O2 + H(+) = harderoheme III + CO2 + 2 H2O. It carries out the reaction harderoheme III + H2O2 + H(+) = heme b + CO2 + 2 H2O. Its pathway is porphyrin-containing compound metabolism; protoheme biosynthesis. Functionally, involved in coproporphyrin-dependent heme b biosynthesis. Catalyzes the decarboxylation of Fe-coproporphyrin III (coproheme) to heme b (protoheme IX), the last step of the pathway. The reaction occurs in a stepwise manner with a three-propionate intermediate. The polypeptide is Coproheme decarboxylase (Staphylococcus aureus (strain Mu50 / ATCC 700699)).